The sequence spans 985 residues: Rho guanine nucleotide exchange factor 2 (985 aa).

The segment at 1–32 is disordered; it reads MSRIESLTRARIDRSKEQATKTREKEKMKEAK. Residues 39-86 form a Phorbol-ester/DAG-type zinc finger; that stretch reads GHLFTTISVSGMTMCYACNKSITAKEALICPTCNVTIHNRCKDTLANC. Phosphoserine is present on residues Ser109, Ser122, Ser129, Ser133, and Ser137. The interaction with DYNLT1 stretch occupies residues 131–161; it reads RQSLLGSRRGLSSLSLAKSVSTTNIAGHFND. Ser143 is modified (phosphoserine; by PAK4). Ser151, Ser163, Ser172, Ser174, and Ser177 each carry phosphoserine. In terms of domain architecture, DH spans 236-433; sequence KKQDVIYELI…KELLSNVDQD (198 aa). The residue at position 354 (Lys354) is an N6-acetyllysine. The 100-residue stretch at 473 to 572 folds into the PH domain; it reads KLIHDGCLLW…WIRVIQQSVR (100 aa). The stretch at 591-615 forms a coiled coil; that stretch reads LRRIKTKLQQKNQALVELLQMNVEL. A phosphoserine mark is found at Ser646 and Ser649. Residue Thr680 is modified to Phosphothreonine; by MAPK1 or MAPK3. Ser692, Ser710, and Ser781 each carry phosphoserine. Thr795 bears the Phosphothreonine mark. Residues 797 to 866 are a coiled coil; it reads EKQATELALL…RQLAALGQNE (70 aa). The residue at position 885 (Ser885) is a Phosphoserine. Disordered stretches follow at residues 890-909 and 918-985; these read DALY…DRLD and HRPF…ASES. At Tyr893 the chain carries Phosphotyrosine. Ser895 is subject to Phosphoserine; by PAK4. Basic and acidic residues predominate over residues 919–938; that stretch reads RPFDDREAQELGSPEDRLQD. Phosphoserine is present on residues Ser931, Ser939, and Ser940. Residues 940–949 show a composition bias toward acidic residues; that stretch reads SDPDTCSEEE. Thr944 carries the post-translational modification Phosphothreonine. Ser946, Ser951, Ser952, Ser955, and Ser959 each carry phosphoserine.

As to quaternary structure, found in a complex composed at least of ARHGEF2, NOD2 and RIPK2. Interacts with RIPK2; the interaction mediates tyrosine phosphorylation of RIPK2 by Src kinase CSK. Interacts with RIPK1 and RIPK3. Interacts with YWHAZ/14-3-3 zeta; when phosphorylated at Ser-885. Interacts with the kinases PAK4, AURKA and MAPK1. Interacts with RHOA and RAC1. Interacts with NOD1. Interacts (via the N- terminal zinc finger) with CAPN6 (via domain II). Interacts with DYNLT1. Phosphorylation of Ser-885 by PAK1 induces binding to protein YWHAZ, promoting its relocation to microtubules and the inhibition of its activity. Phosphorylated by AURKA and CDK1 during mitosis, which negatively regulates its activity. Phosphorylation by MAPK1 or MAPK3 increases nucleotide exchange activity. Phosphorylation by PAK4 releases GEF-H1 from the microtubules. Phosphorylated on serine, threonine and tyrosine residues in a RIPK2-dependent manner.

The protein resides in the cytoplasm. It localises to the cytoskeleton. The protein localises to the cell junction. It is found in the tight junction. Its subcellular location is the golgi apparatus. The protein resides in the spindle. It localises to the cytoplasmic vesicle. Activates Rho-GTPases by promoting the exchange of GDP for GTP. May be involved in epithelial barrier permeability, cell motility and polarization, dendritic spine morphology, antigen presentation, leukemic cell differentiation, cell cycle regulation, innate immune response, and cancer. Binds Rac-GTPases, but does not seem to promote nucleotide exchange activity toward Rac-GTPases. May stimulate instead the cortical activity of Rac. Inactive toward CDC42, TC10, or Ras-GTPases. Forms an intracellular sensing system along with NOD1 for the detection of microbial effectors during cell invasion by pathogens. Involved in innate immune signaling transduction pathway promoting cytokine IL6/interleukin-6 and TNF-alpha secretion in macrophage upon stimulation by bacterial peptidoglycans; acts as a signaling intermediate between NOD2 receptor and RIPK2 kinase. Contributes to the tyrosine phosphorylation of RIPK2 through Src tyrosine kinase leading to NF-kappaB activation by NOD2. Overexpression activates Rho-, but not Rac-GTPases, and increases paracellular permeability. Involved in neuronal progenitor cell division and differentiation. Involved in the migration of precerebellar neurons. The polypeptide is Rho guanine nucleotide exchange factor 2 (Arhgef2) (Rattus norvegicus (Rat)).